We begin with the raw amino-acid sequence, 60 residues long: Large ribosomal subunit protein bL32 (60 aa).

Residues M1–T43 are disordered. Positions R7–R16 are enriched in basic residues.

The protein belongs to the bacterial ribosomal protein bL32 family.

The protein is Large ribosomal subunit protein bL32 of Saccharophagus degradans (strain 2-40 / ATCC 43961 / DSM 17024).